Reading from the N-terminus, the 81-residue chain is MNPLISAASVIAAGLAVGLASIGPGIGQGTAAGQAVEGIARQPEAEGKIRGTLLLSLAFMEALTIYGLVVALALLFANPFV.

The next 2 membrane-spanning stretches (helical) occupy residues 7–27 (AASV…PGIG) and 57–77 (LAFM…LLFA).

This sequence belongs to the ATPase C chain family. F-type ATPases have 2 components, F(1) - the catalytic core - and F(0) - the membrane proton channel. F(1) has five subunits: alpha(3), beta(3), gamma(1), delta(1), epsilon(1). F(0) has four main subunits: a(1), b(1), b'(1) and c(10-14). The alpha and beta chains form an alternating ring which encloses part of the gamma chain. F(1) is attached to F(0) by a central stalk formed by the gamma and epsilon chains, while a peripheral stalk is formed by the delta, b and b' chains.

The protein resides in the plastid. It localises to the chloroplast thylakoid membrane. In terms of biological role, f(1)F(0) ATP synthase produces ATP from ADP in the presence of a proton or sodium gradient. F-type ATPases consist of two structural domains, F(1) containing the extramembraneous catalytic core and F(0) containing the membrane proton channel, linked together by a central stalk and a peripheral stalk. During catalysis, ATP synthesis in the catalytic domain of F(1) is coupled via a rotary mechanism of the central stalk subunits to proton translocation. Its function is as follows. Key component of the F(0) channel; it plays a direct role in translocation across the membrane. A homomeric c-ring of between 10-14 subunits forms the central stalk rotor element with the F(1) delta and epsilon subunits. The sequence is that of ATP synthase subunit c, chloroplastic from Pelargonium hortorum (Common geranium).